The primary structure comprises 396 residues: Tryptophan synthase beta chain (396 aa).

Lys86 bears the N6-(pyridoxal phosphate)lysine mark.

This sequence belongs to the TrpB family. As to quaternary structure, tetramer of two alpha and two beta chains. Requires pyridoxal 5'-phosphate as cofactor.

The catalysed reaction is (1S,2R)-1-C-(indol-3-yl)glycerol 3-phosphate + L-serine = D-glyceraldehyde 3-phosphate + L-tryptophan + H2O. The protein operates within amino-acid biosynthesis; L-tryptophan biosynthesis; L-tryptophan from chorismate: step 5/5. In terms of biological role, the beta subunit is responsible for the synthesis of L-tryptophan from indole and L-serine. The chain is Tryptophan synthase beta chain from Vibrio cholerae serotype O1 (strain ATCC 39315 / El Tor Inaba N16961).